We begin with the raw amino-acid sequence, 222 residues long: N-(5'-phosphoribosyl)anthranilate isomerase (222 aa).

It belongs to the TrpF family.

It carries out the reaction N-(5-phospho-beta-D-ribosyl)anthranilate = 1-(2-carboxyphenylamino)-1-deoxy-D-ribulose 5-phosphate. It participates in amino-acid biosynthesis; L-tryptophan biosynthesis; L-tryptophan from chorismate: step 3/5. This Rhizobium etli (strain ATCC 51251 / DSM 11541 / JCM 21823 / NBRC 15573 / CFN 42) protein is N-(5'-phosphoribosyl)anthranilate isomerase.